The following is a 286-amino-acid chain: ATP synthase gamma chain (286 aa).

It belongs to the ATPase gamma chain family. As to quaternary structure, F-type ATPases have 2 components, CF(1) - the catalytic core - and CF(0) - the membrane proton channel. CF(1) has five subunits: alpha(3), beta(3), gamma(1), delta(1), epsilon(1). CF(0) has three main subunits: a, b and c.

Its subcellular location is the cell inner membrane. Its function is as follows. Produces ATP from ADP in the presence of a proton gradient across the membrane. The gamma chain is believed to be important in regulating ATPase activity and the flow of protons through the CF(0) complex. This is ATP synthase gamma chain from Shewanella sediminis (strain HAW-EB3).